We begin with the raw amino-acid sequence, 235 residues long: Aspartate/glutamate leucyltransferase (235 aa).

It belongs to the R-transferase family. Bpt subfamily.

It localises to the cytoplasm. The catalysed reaction is N-terminal L-glutamyl-[protein] + L-leucyl-tRNA(Leu) = N-terminal L-leucyl-L-glutamyl-[protein] + tRNA(Leu) + H(+). It carries out the reaction N-terminal L-aspartyl-[protein] + L-leucyl-tRNA(Leu) = N-terminal L-leucyl-L-aspartyl-[protein] + tRNA(Leu) + H(+). Functionally, functions in the N-end rule pathway of protein degradation where it conjugates Leu from its aminoacyl-tRNA to the N-termini of proteins containing an N-terminal aspartate or glutamate. This is Aspartate/glutamate leucyltransferase from Pseudomonas syringae pv. tomato (strain ATCC BAA-871 / DC3000).